Consider the following 754-residue polypeptide: Probable beta-glucosidase D (754 aa).

The first 20 residues, 1–20 (MKVLSFIVAAALLGLTGASS), serve as a signal peptide directing secretion. N-linked (GlcNAc...) asparagine glycosylation is found at asparagine 66, asparagine 69, and asparagine 186. The segment at 186–206 (NRTGGGGGGGGDSGSAPYSSN) is disordered. Over residues 188–198 (TGGGGGGGGDS) the composition is skewed to gly residues. Asparagine 239 carries an N-linked (GlcNAc...) asparagine glycan. Aspartate 267 is an active-site residue. 9 N-linked (GlcNAc...) asparagine glycosylation sites follow: asparagine 301, asparagine 345, asparagine 443, asparagine 512, asparagine 534, asparagine 573, asparagine 588, asparagine 655, and asparagine 745.

It belongs to the glycosyl hydrolase 3 family.

The protein resides in the secreted. The catalysed reaction is Hydrolysis of terminal, non-reducing beta-D-glucosyl residues with release of beta-D-glucose.. It participates in glycan metabolism; cellulose degradation. Beta-glucosidases are one of a number of cellulolytic enzymes involved in the degradation of cellulosic biomass. Catalyzes the last step releasing glucose from the inhibitory cellobiose. The protein is Probable beta-glucosidase D (bglD) of Aspergillus niger (strain ATCC MYA-4892 / CBS 513.88 / FGSC A1513).